A 133-amino-acid chain; its full sequence is Small ribosomal subunit protein uS11 (133 aa).

The interval 1-23 (MPPKTRGAVRKPRKKDKKNIALG) is disordered. The segment covering 7 to 17 (GAVRKPRKKDK) has biased composition (basic residues).

The protein belongs to the universal ribosomal protein uS11 family. As to quaternary structure, part of the 30S ribosomal subunit. Interacts with proteins S7 and S18. Binds to IF-3.

Functionally, located on the platform of the 30S subunit, it bridges several disparate RNA helices of the 16S rRNA. Forms part of the Shine-Dalgarno cleft in the 70S ribosome. This is Small ribosomal subunit protein uS11 from Arthrobacter sp. (strain FB24).